The primary structure comprises 409 residues: Serine/threonine transporter SstT (409 aa).

The next 9 membrane-spanning stretches (helical) occupy residues L17–A37, F49–I69, I83–F103, A142–F162, V180–A200, L218–F238, M299–I319, V331–I351, and L357–I377.

This sequence belongs to the dicarboxylate/amino acid:cation symporter (DAACS) (TC 2.A.23) family.

The protein resides in the cell inner membrane. It catalyses the reaction L-serine(in) + Na(+)(in) = L-serine(out) + Na(+)(out). The enzyme catalyses L-threonine(in) + Na(+)(in) = L-threonine(out) + Na(+)(out). Involved in the import of serine and threonine into the cell, with the concomitant import of sodium (symport system). The polypeptide is Serine/threonine transporter SstT (Pseudomonas paraeruginosa (strain DSM 24068 / PA7) (Pseudomonas aeruginosa (strain PA7))).